Here is a 52-residue protein sequence, read N- to C-terminus: Large ribosomal subunit protein bL32c (52 aa).

The protein belongs to the bacterial ribosomal protein bL32 family.

It is found in the plastid. The protein localises to the chloroplast. The chain is Large ribosomal subunit protein bL32c from Arabis hirsuta (Hairy rock-cress).